The chain runs to 212 residues: ATP phosphoribosyltransferase 2 (212 aa).

Belongs to the ATP phosphoribosyltransferase family. Short subfamily. As to quaternary structure, heteromultimer composed of HisG and HisZ subunits.

The protein localises to the cytoplasm. The catalysed reaction is 1-(5-phospho-beta-D-ribosyl)-ATP + diphosphate = 5-phospho-alpha-D-ribose 1-diphosphate + ATP. The protein operates within amino-acid biosynthesis; L-histidine biosynthesis; L-histidine from 5-phospho-alpha-D-ribose 1-diphosphate: step 1/9. Its function is as follows. Catalyzes the condensation of ATP and 5-phosphoribose 1-diphosphate to form N'-(5'-phosphoribosyl)-ATP (PR-ATP). Has a crucial role in the pathway because the rate of histidine biosynthesis seems to be controlled primarily by regulation of HisG enzymatic activity. This is ATP phosphoribosyltransferase 2 (hisG2) from Geobacter sulfurreducens (strain ATCC 51573 / DSM 12127 / PCA).